The sequence spans 265 residues: Required for respiratory growth protein 9, mitochondrial (265 aa).

The N-terminal 68 residues, 1-68 (MLKSSPLHSA…RYFSKSRPIL (68 aa)), are a transit peptide targeting the mitochondrion. The segment at 69–167 (SPLPETSEQS…EGWNPRKRLH (99 aa)) is disordered. Positions 72–87 (PETSEQSSPSYLSTAN) are enriched in polar residues. Basic and acidic residues-rich tracts occupy residues 95–106 (QGLKSDRGDINS) and 131–143 (QKRE…RELE).

Belongs to the RRG9 family.

It is found in the mitochondrion. Required for respiratory activity and maintenance and expression of the mitochondrial genome. In Blastomyces gilchristii (strain SLH14081) (Blastomyces dermatitidis), this protein is Required for respiratory growth protein 9, mitochondrial (RRG9).